A 234-amino-acid polypeptide reads, in one-letter code: LexA repressor (234 aa).

The H-T-H motif DNA-binding region spans 26 to 46 (FEEMKEALDLKSKSGVHRLIS). Positions 73 to 100 (AVGKAAPVSQREAANTNSALPPLRAAPK) are disordered. Residues 91-100 (ALPPLRAAPK) are compositionally biased toward low complexity. Catalysis depends on for autocatalytic cleavage activity residues Ser-154 and Lys-192.

The protein belongs to the peptidase S24 family. Homodimer.

The catalysed reaction is Hydrolysis of Ala-|-Gly bond in repressor LexA.. Its function is as follows. Represses a number of genes involved in the response to DNA damage (SOS response), including recA and lexA. In the presence of single-stranded DNA, RecA interacts with LexA causing an autocatalytic cleavage which disrupts the DNA-binding part of LexA, leading to derepression of the SOS regulon and eventually DNA repair. This is LexA repressor from Novosphingobium aromaticivorans (strain ATCC 700278 / DSM 12444 / CCUG 56034 / CIP 105152 / NBRC 16084 / F199).